Here is a 367-residue protein sequence, read N- to C-terminus: Apolipoprotein A-V (367 aa).

A signal peptide spans 1 to 20; the sequence is MVAVLTWALALLSAFATAQT. A Phosphoserine modification is found at Ser56.

This sequence belongs to the apolipoprotein A1/A4/E family. In terms of assembly, interacts with GPIHBP1. Interacts with SORL1; this interaction leads to APOA5 internalization and sorting either to lysosomes and degradation, or to the trans-Golgi network. Phosphorylated by FAM20C in the extracellular medium.

The protein localises to the secreted. The protein resides in the early endosome. It localises to the late endosome. It is found in the golgi apparatus. Its subcellular location is the trans-Golgi network. Functionally, minor apolipoprotein mainly associated with HDL and to a lesser extent with VLDL. May also be associated with chylomicrons. Important determinant of plasma triglyceride (TG) levels by both being a potent stimulator of apo-CII lipoprotein lipase (LPL) TG hydrolysis and an inhibitor of the hepatic VLDL-TG production rate (without affecting the VLDL-apoB production rate). Activates poorly lecithin:cholesterol acyltransferase (LCAT) and does not enhance efflux of cholesterol from macrophages. Binds heparin. The chain is Apolipoprotein A-V (APOA5) from Phoca vitulina (Harbor seal).